Consider the following 80-residue polypeptide: Secreted transmembrane peptide 3 (80 aa).

A signal peptide spans 1–27 (MGLKMSSNALLLSLFLLLLCLFSEIGG). The interval 44-80 (IATPPSLTCGGQRLGGPQPRLSPCPRPRPRPRPRTGS) is disordered. An SCOOP motif motif is present at residues 62–80 (PRLSPCPRPRPRPRPRTGS). Positions 70-80 (PRPRPRPRTGS) are enriched in basic residues.

It belongs to the serine rich endogenous peptide (SCOOP) phytocytokine family. In terms of assembly, interacts with MIK2 (via extracellular leucine-rich repeat domain); this interaction triggers the formation of complex between MIK2 and the BAK1/SERK3 and SERK4 coreceptors, and subsequent BAK1 activation by phosphorylation. As to expression, mostly expressed in leaves, and, to a lower extent, in roots, stems, siliques, seeds and flowers.

The protein resides in the cell membrane. Its subcellular location is the secreted. It localises to the extracellular space. It is found in the apoplast. The protein localises to the endoplasmic reticulum. The protein resides in the golgi apparatus. In terms of biological role, brassicaceae-specific phytocytokine (plant endogenous peptide released into the apoplast) perceived by MIK2 in a BAK1/SERK3 and SERK4 coreceptors-dependent manner, that modulates various physiological and antimicrobial processes including growth prevention and reactive oxygen species (ROS) response regulation. The sequence is that of Secreted transmembrane peptide 3 from Arabidopsis thaliana (Mouse-ear cress).